Consider the following 859-residue polypeptide: Cadherin-related family member 1 (859 aa).

The signal sequence occupies residues 1–21 (MRRGPQVALVLGLLCIYLAQA). Residues 22-701 (NFAPHFFDNG…LIQTKDNPMK (680 aa)) lie on the Extracellular side of the membrane. 6 consecutive Cadherin domains span residues 36-135 (NGNM…APRF), 136-247 (LQEP…APIF), 248-354 (VGTP…PPTF), 360-473 (PQNK…VPKF), 474-577 (TSHY…YPQF), and 569-691 (DVND…MAAF). N-linked (GlcNAc...) asparagine glycans are attached at residues Asn58 and Asn89. N-linked (GlcNAc...) asparagine glycosylation is found at Asn288 and Asn297. The chain crosses the membrane as a helical span at residues 702–722 (AVGVLAGVMAIVVAITVLIST). Over 723–859 (ATFWRNKKSN…KKSLGNKAYV (137 aa)) the chain is Cytoplasmic. Residues 789 to 859 (PPRAPALPPP…KKSLGNKAYV (71 aa)) form a disordered region. The segment covering 790 to 800 (PRAPALPPPPK) has biased composition (pro residues). Positions 802-816 (ASSTVAQQTVPTVSG) are enriched in polar residues. Positions 817-827 (SLTPQPSQQLP) are enriched in low complexity.

As to quaternary structure, interacts with PROM1. In terms of processing, undergoes proteolytic cleavage; produces a soluble 95 kDa N-terminal fragment and a 25 kDa cell-associated C-terminal fragment. In terms of tissue distribution, expressed in the retina. Strongly expressed by the mitral and tufted cells in the main and accessory olfactory bulbs. Also expressed in the septum and olfactory cortex. Weakly expressed in the triangular septal nucleus and piriform cortex.

Its subcellular location is the cell membrane. Its function is as follows. Potential calcium-dependent cell-adhesion protein. May be required for the structural integrity of the outer segment (OS) of photoreceptor cells. This is Cadherin-related family member 1 (Cdhr1) from Rattus norvegicus (Rat).